We begin with the raw amino-acid sequence, 81 residues long: MAETSAPAKATAALKKGALVRVNRHAFSSSTEAAASDPSPPDYIFEGPGELLAVKEGYGQVRWRMPVPDVWLRIDQLEPFS.

Belongs to the complex I NdhO subunit family. NDH-1 can be composed of about 15 different subunits; different subcomplexes with different compositions have been identified which probably have different functions.

Its subcellular location is the cellular thylakoid membrane. The enzyme catalyses a plastoquinone + NADH + (n+1) H(+)(in) = a plastoquinol + NAD(+) + n H(+)(out). It catalyses the reaction a plastoquinone + NADPH + (n+1) H(+)(in) = a plastoquinol + NADP(+) + n H(+)(out). NDH-1 shuttles electrons from an unknown electron donor, via FMN and iron-sulfur (Fe-S) centers, to quinones in the respiratory and/or the photosynthetic chain. The immediate electron acceptor for the enzyme in this species is believed to be plastoquinone. Couples the redox reaction to proton translocation, and thus conserves the redox energy in a proton gradient. Cyanobacterial NDH-1 also plays a role in inorganic carbon-concentration. The protein is NAD(P)H-quinone oxidoreductase subunit O of Prochlorococcus marinus (strain MIT 9303).